Reading from the N-terminus, the 737-residue chain is Protein OPG064 (737 aa).

Methionine 1 is modified (N-acetylmethionine; by host). Cysteine 496 and cysteine 535 are oxidised to a cystine.

Belongs to the orthopoxvirus OPG064 family. In terms of assembly, interacts with host KLC2; this interaction promotes IEV trafficking by engaging the host kinesin-1 complex. Interacts with protein OPG056. Post-translationally, N-acetylated on initiator methionine by host.

Functionally, plays a role in intracellular enveloped virus (IEV) transport to the cell surface on microtubules. Together with protein OPG056, forms a complex that interacts with host KLC2 (kinesin light chain isoform 2) to engage the kinesin-1 complex and thereby promote IEV trafficking. The protein is Protein OPG064 (OPG064) of Monkeypox virus.